The chain runs to 622 residues: Pyranose 2-oxidase (622 aa).

The first 28 residues, 1–28 (MSASSSDPFHSFAKTSFTSKAAKRATAH), serve as a signal peptide directing secretion. A propeptide spanning residues 29-37 (SLPPLPGPG) is cleaved from the precursor. H167 carries the post-translational modification Tele-8alpha-FAD histidine. Substrate-binding residues include Q449 and H451. The active-site Proton acceptor is H546. The active site involves N591.

The protein belongs to the GMC oxidoreductase family. In terms of assembly, homotetramer. The cofactor is FAD.

The protein resides in the periplasm. It carries out the reaction D-glucose + O2 = 2-dehydro-D-glucose + H2O2. Functionally, catalyzes the oxidation of various aldopyranoses and disaccharides on carbon-2 to the corresponding 2-keto sugars concomitant with the reduction of O(2) to H(2)O(2). Plays an important role in lignin degradation of wood rot fungi by supplying the essential cosubstrate H(2)O(2) for the ligninolytic peroxidases, lignin peroxidase and manganese-dependent peroxidase. The preferred substrate is D-glucose which is converted to 2-dehydro-D-glucose, an intermediate of a secondary metabolic pathway leading to the antibiotic cortalcerone. Also acts on D-xylose, together with D-glucose the major sugars derived from wood, on L-sorbose, D-galactose and 1,5-anhydroglucitol, a diagnostic marker of diabetes mellitus. This Trametes hirsuta (White-rot fungus) protein is Pyranose 2-oxidase (P2OX).